The primary structure comprises 61 residues: Small ribosomal subunit protein uS14 (61 aa).

4 residues coordinate Zn(2+): cysteine 24, cysteine 27, cysteine 40, and cysteine 43.

Belongs to the universal ribosomal protein uS14 family. Zinc-binding uS14 subfamily. As to quaternary structure, part of the 30S ribosomal subunit. Contacts proteins S3 and S10. The cofactor is Zn(2+).

Binds 16S rRNA, required for the assembly of 30S particles and may also be responsible for determining the conformation of the 16S rRNA at the A site. In Thermotoga neapolitana (strain ATCC 49049 / DSM 4359 / NBRC 107923 / NS-E), this protein is Small ribosomal subunit protein uS14.